We begin with the raw amino-acid sequence, 704 residues long: Elongation factor G 1 (704 aa).

The 284-residue stretch at E8–A291 folds into the tr-type G domain. Residues A17–T24, D88–H92, and N142–D145 contribute to the GTP site.

The protein belongs to the TRAFAC class translation factor GTPase superfamily. Classic translation factor GTPase family. EF-G/EF-2 subfamily.

It localises to the cytoplasm. Catalyzes the GTP-dependent ribosomal translocation step during translation elongation. During this step, the ribosome changes from the pre-translocational (PRE) to the post-translocational (POST) state as the newly formed A-site-bound peptidyl-tRNA and P-site-bound deacylated tRNA move to the P and E sites, respectively. Catalyzes the coordinated movement of the two tRNA molecules, the mRNA and conformational changes in the ribosome. This Burkholderia mallei (strain ATCC 23344) protein is Elongation factor G 1.